A 398-amino-acid chain; its full sequence is Nicotinate phosphoribosyltransferase (398 aa).

Phosphohistidine; by autocatalysis is present on histidine 214.

This sequence belongs to the NAPRTase family. In terms of processing, transiently phosphorylated on a His residue during the reaction cycle. Phosphorylation strongly increases the affinity for substrates and increases the rate of nicotinate D-ribonucleotide production. Dephosphorylation regenerates the low-affinity form of the enzyme, leading to product release.

The catalysed reaction is nicotinate + 5-phospho-alpha-D-ribose 1-diphosphate + ATP + H2O = nicotinate beta-D-ribonucleotide + ADP + phosphate + diphosphate. The protein operates within cofactor biosynthesis; NAD(+) biosynthesis; nicotinate D-ribonucleotide from nicotinate: step 1/1. In terms of biological role, catalyzes the synthesis of beta-nicotinate D-ribonucleotide from nicotinate and 5-phospho-D-ribose 1-phosphate at the expense of ATP. This is Nicotinate phosphoribosyltransferase from Xanthomonas campestris pv. campestris (strain 8004).